Reading from the N-terminus, the 413-residue chain is Na(+)-translocating NADH-quinone reductase subunit B (413 aa).

Helical transmembrane passes span 56-76, 123-143, and 169-189; these read MMIL…YNVG, LLGA…GGFW, and IVPP…GVVI. An FMN phosphoryl threonine modification is found at T236. The next 5 membrane-spanning stretches (helical) occupy residues 270-290, 297-317, 322-342, 358-378, and 381-401; these read GSIG…IIFG, IVAG…WIGS, LFAM…GMIF, WWYG…NPAY, and GMML…YVVV.

This sequence belongs to the NqrB/RnfD family. Composed of six subunits; NqrA, NqrB, NqrC, NqrD, NqrE and NqrF. Requires FMN as cofactor.

The protein resides in the cell inner membrane. The enzyme catalyses a ubiquinone + n Na(+)(in) + NADH + H(+) = a ubiquinol + n Na(+)(out) + NAD(+). In terms of biological role, NQR complex catalyzes the reduction of ubiquinone-1 to ubiquinol by two successive reactions, coupled with the transport of Na(+) ions from the cytoplasm to the periplasm. NqrA to NqrE are probably involved in the second step, the conversion of ubisemiquinone to ubiquinol. This chain is Na(+)-translocating NADH-quinone reductase subunit B, found in Yersinia pestis.